The chain runs to 120 residues: Small ribosomal subunit protein bS16 (120 aa).

Positions 84-120 are disordered; that stretch reads KRESRNNPQQGQPKKKAQERAAAAAAAAEKAASEAAA. Low complexity predominate over residues 103–120; sequence RAAAAAAAAEKAASEAAA.

The protein belongs to the bacterial ribosomal protein bS16 family.

The sequence is that of Small ribosomal subunit protein bS16 from Beijerinckia indica subsp. indica (strain ATCC 9039 / DSM 1715 / NCIMB 8712).